The primary structure comprises 476 residues: Cardiolipin synthase (476 aa).

A run of 2 helical transmembrane segments spans residues 2–22 and 31–51; these read HLLINIIFLINIIFIISIIFI and WAWILILTFLPILGFIIYILF. PLD phosphodiesterase domains are found at residues 207–234 and 389–416; these read INYRNHRKILIIDSKVAFLGGFNIGDEY and EKGFLHAKTIVADSSICSVGTANMDIRS. Catalysis depends on residues histidine 212, lysine 214, aspartate 219, histidine 394, lysine 396, and aspartate 401.

Belongs to the phospholipase D family. Cardiolipin synthase subfamily.

The protein resides in the cell membrane. It carries out the reaction 2 a 1,2-diacyl-sn-glycero-3-phospho-(1'-sn-glycerol) = a cardiolipin + glycerol. Its function is as follows. Catalyzes the reversible phosphatidyl group transfer from one phosphatidylglycerol molecule to another to form cardiolipin (CL) (diphosphatidylglycerol) and glycerol. This chain is Cardiolipin synthase (cls), found in Clostridium perfringens (strain SM101 / Type A).